The primary structure comprises 406 residues: Pygopus homolog 2 (406 aa).

Disordered regions lie at residues Met1–Val73 and Val106–Pro323. The residue at position 2 (Ala2) is an N-acetylalanine. The residue at position 40 (Ser40) is a Phosphoserine. Residues Pro41–Lys47 carry the Nuclear localization signal motif. Pro residues-rich tracts occupy residues Arg131–Met141 and Pro149–Gly158. The segment covering Ser164–Ser179 has biased composition (polar residues). Residues Ser236–Pro252 show a composition bias toward pro residues. The span at Asn285–Ser296 shows a compositional bias: polar residues. Position 302 is a phosphothreonine (Thr302). A PHD-type zinc finger spans residues Val327 to Thr385.

In terms of assembly, binds to BCL9 via the PHD-type zinc finger motif, and thereby becomes part of the nuclear beta-catenin/TCF complex.

It localises to the nucleus. Functionally, involved in signal transduction through the Wnt pathway. The chain is Pygopus homolog 2 (PYGO2) from Homo sapiens (Human).